The following is a 287-amino-acid chain: ATP synthase gamma chain (287 aa).

The protein belongs to the ATPase gamma chain family. F-type ATPases have 2 components, CF(1) - the catalytic core - and CF(0) - the membrane proton channel. CF(1) has five subunits: alpha(3), beta(3), gamma(1), delta(1), epsilon(1). CF(0) has three main subunits: a, b and c.

It localises to the cell inner membrane. Its function is as follows. Produces ATP from ADP in the presence of a proton gradient across the membrane. The gamma chain is believed to be important in regulating ATPase activity and the flow of protons through the CF(0) complex. This Parabacteroides distasonis (strain ATCC 8503 / DSM 20701 / CIP 104284 / JCM 5825 / NCTC 11152) protein is ATP synthase gamma chain.